The sequence spans 600 residues: Terpenoid synthase 8 (600 aa).

Mg(2+)-binding residues include Asp352, Asp356, Asn497, and Asp505. The DDXXD motif motif lies at 352 to 356; that stretch reads DDTCD.

It belongs to the terpene synthase family. Tpsa subfamily. Mg(2+) serves as cofactor. Requires Mn(2+) as cofactor. Stele, and tips of primary and secondary root.

Its subcellular location is the plastid. It catalyses the reaction (2E,6E,10E)-geranylgeranyl diphosphate = rhizathalene A + diphosphate. Its pathway is secondary metabolite biosynthesis; terpenoid biosynthesis. Its function is as follows. Catalyzes the synthesis of the semivolatile diterpene rhizatalene A. This is Terpenoid synthase 8 (TPS08) from Arabidopsis thaliana (Mouse-ear cress).